The chain runs to 358 residues: Glucose 1-dehydrogenase (358 aa).

Cys-38 contacts Zn(2+). Substrate is bound at residue Thr-40. His-65, Glu-66, Cys-92, Cys-95, Cys-98, and Cys-106 together coordinate Zn(2+). Substrate contacts are provided by Glu-113, Glu-149, and Asn-153. Position 149 (Glu-149) interacts with Zn(2+). Residues 187–190 (SGPI), 209–211 (NRR), 268–270 (FGT), 296–298 (SVN), and Lys-342 contribute to the NADP(+) site. Substrate is bound at residue Asn-298.

The protein belongs to the zinc-containing alcohol dehydrogenase family. Glucose 1-dehydrogenase subfamily. Zn(2+) serves as cofactor.

It carries out the reaction D-glucose + NAD(+) = D-glucono-1,5-lactone + NADH + H(+). It catalyses the reaction D-glucose + NADP(+) = D-glucono-1,5-lactone + NADPH + H(+). Functionally, catalyzes the NAD(P)(+)-dependent oxidation of D-glucose to D-gluconate via gluconolactone. Can utilize both NAD(+) and NADP(+) as electron acceptor. Is involved in the degradation of glucose through a non-phosphorylative variant of the Entner-Doudoroff pathway. This chain is Glucose 1-dehydrogenase, found in Metallosphaera sedula (strain ATCC 51363 / DSM 5348 / JCM 9185 / NBRC 15509 / TH2).